A 1902-amino-acid chain; its full sequence is PII-type proteinase (1902 aa).

A signal peptide spans 1 to 33 (MQRKKKGLSILLAGTVALGALAVLPVGEIQAKA). Residues 34–187 (AISQQTKGSS…VTLAKVYYPT (154 aa)) constitute a propeptide that is removed on maturation. The Peptidase S8 domain maps to 191–697 (ANSMANVQAV…AGLVDVKAAI (507 aa)). Active-site charge relay system residues include D217, H281, and S620. The tract at residues 1796–1874 (GKGDGTTGTS…GALPKTGETT (79 aa)) is disordered. Positions 1797–1812 (KGDGTTGTSDKGGGQG) are enriched in gly residues. Residues 1830–1843 (SQPSSGGNIPTNPA) show a composition bias toward polar residues. The LPXTG sorting signal motif lies at 1867 to 1871 (LPKTG). A Pentaglycyl murein peptidoglycan amidated threonine modification is found at T1870. Positions 1871–1902 (GETTERPAFGFLGVIVVSLMGVLGLKRKQREE) are cleaved as a propeptide — removed by sortase.

It belongs to the peptidase S8 family.

Its subcellular location is the secreted. It localises to the cell wall. It catalyses the reaction Endopeptidase activity with very broad specificity, although some subsite preference have been noted, e.g. large hydrophobic residues in the P1 and P4 positions, and Pro in the P2 position. Best known for its action on caseins, although it has been shown to hydrolyze hemoglobin and oxidized insulin B-chain.. Functionally, protease which breaks down milk proteins during the growth of the bacteria on milk. This is PII-type proteinase (prt) from Lactococcus lactis subsp. cremoris (Streptococcus cremoris).